The following is a 527-amino-acid chain: MKMLHRSALLEQLLSSPKTLHQLPASTLVEHALQRNEGILTDSGALAVKTGLYTGRSPQDKFIVDEPMSRDSIHWGATNKPISSEVFTRLKDKVLHYLQQKEVRYASVGFAGADPSFQLPITYLNEFAWHHLFARQLFIREQAPSNNGLEPFTIISAPTFKADPSVDGTRSEAFVIISFEQRIILIGGTEYAGEMKKAIFSVMNYLLPEAGVLPMHCSANTTDEGETALFFGLSGTGKTTLSASEHRRLIGDDEHGWSEKGIFNIEGGCYAKCIGLSKESEPQIWDAIAFGAVLENVVVDPNTGKPDFKSGELTENTRAAYPLEAIPNALLPSVAGPPKAIIFLTADAFGVLPPISKLTKEQAMYHFLSGYTSKLAGTERGITQPEATFSTCFGAPFLPRKPEEYATMLGDKLENDDVQVFLVNTGWTGGSYGTGTRIKLAYTRAMVEAALQGKLDEIETVCDPIFGLYVPTHCPGVPDELLTPRRVWKDEAAYEATALQLAKQFHENFSAFPAAKDSVRLAGPRLA.

Arg56, Tyr191, and Lys197 together coordinate substrate. Residues Lys197, His216, and Gly232–Thr240 each bind ATP. Residues Lys197 and His216 each coordinate Mn(2+). Asp253 serves as a coordination point for Mn(2+). Residues Glu281, Arg318, Arg437 to Ile438, and Thr443 each bind ATP. Arg318 is a substrate binding site.

It belongs to the phosphoenolpyruvate carboxykinase (ATP) family. Requires Mn(2+) as cofactor.

The protein localises to the cytoplasm. The enzyme catalyses oxaloacetate + ATP = phosphoenolpyruvate + ADP + CO2. It functions in the pathway carbohydrate biosynthesis; gluconeogenesis. Its function is as follows. Involved in the gluconeogenesis. Catalyzes the conversion of oxaloacetate (OAA) to phosphoenolpyruvate (PEP) through direct phosphoryl transfer between the nucleoside triphosphate and OAA. In Shouchella clausii (strain KSM-K16) (Alkalihalobacillus clausii), this protein is Phosphoenolpyruvate carboxykinase (ATP).